A 284-amino-acid chain; its full sequence is Putative ABC transporter ATP-binding protein PH1815 (284 aa).

In terms of domain architecture, ABC transporter spans 4 to 244 (IEVEDVSFRY…VEFLRTIGVK (241 aa)). 38 to 45 (GPSGSGKS) is an ATP binding site.

This sequence belongs to the ABC transporter superfamily.

The protein resides in the cell membrane. Functionally, probably part of an ABC transporter complex. Responsible for energy coupling to the transport system. This is Putative ABC transporter ATP-binding protein PH1815 from Pyrococcus horikoshii (strain ATCC 700860 / DSM 12428 / JCM 9974 / NBRC 100139 / OT-3).